The chain runs to 581 residues: Proline--tRNA ligase (581 aa).

The protein belongs to the class-II aminoacyl-tRNA synthetase family. ProS type 1 subfamily. Homodimer.

It localises to the cytoplasm. The catalysed reaction is tRNA(Pro) + L-proline + ATP = L-prolyl-tRNA(Pro) + AMP + diphosphate. Its function is as follows. Catalyzes the attachment of proline to tRNA(Pro) in a two-step reaction: proline is first activated by ATP to form Pro-AMP and then transferred to the acceptor end of tRNA(Pro). As ProRS can inadvertently accommodate and process non-cognate amino acids such as alanine and cysteine, to avoid such errors it has two additional distinct editing activities against alanine. One activity is designated as 'pretransfer' editing and involves the tRNA(Pro)-independent hydrolysis of activated Ala-AMP. The other activity is designated 'posttransfer' editing and involves deacylation of mischarged Ala-tRNA(Pro). The misacylated Cys-tRNA(Pro) is not edited by ProRS. The protein is Proline--tRNA ligase of Blochmanniella pennsylvanica (strain BPEN).